Reading from the N-terminus, the 237-residue chain is Regulator of G-protein signaling 9-binding protein (237 aa).

The Cytoplasmic portion of the chain corresponds to 1 to 214 (MAKEECKALL…TGPCDLSKAK (214 aa)). Coiled coils occupy residues 29-58 (GSAD…RLRL) and 144-169 (VEDL…MKVN). The segment at 153-202 (EILQVGEMIQDMEMKVNVPRWTVQARQAAGAELLSSASAGVSSVGGVSVE) is SNARE-like. The chain crosses the membrane as a helical; Anchor for type IV membrane protein span at residues 215–234 (AATIFSAVLLAAVALAVCVA). The Extracellular portion of the chain corresponds to 235–237 (KLS).

The protein belongs to the RGS7BP/RGS9BP family. As to quaternary structure, specifically interacts with isoform RGS9-1 of RGS9. Component of the RGS9-1-Gbeta5 complex composed of RGS9-1, Gbeta5 (GNB5) and RGS9BP. In terms of tissue distribution, specifically expressed in the retina. Only present in photoreceptors (at protein level).

The protein resides in the membrane. Functionally, regulator of G protein-coupled receptor (GPCR) signaling in phototransduction. Participates in the recovery phase of visual transduction via its interaction with RGS9-1 isoform. Acts as a membrane-anchor that mediates the targeting of RGS9-1 to the photoreceptor outer segment, where phototransduction takes place. Enhances the ability of RGS9-1 to stimulate G protein GTPase activity, allowing the visual signal to be terminated on the physiologically time scale. It also controls the proteolytic stability of RGS9-1, probably by protecting it from degradation. This chain is Regulator of G-protein signaling 9-binding protein (RGS9BP), found in Bos taurus (Bovine).